The chain runs to 418 residues: Serine hydroxymethyltransferase (418 aa).

(6S)-5,6,7,8-tetrahydrofolate contacts are provided by residues Leu121 and 125–127 (GHL). Residue Lys230 is modified to N6-(pyridoxal phosphate)lysine. (6S)-5,6,7,8-tetrahydrofolate is bound at residue 356–358 (SPF).

The protein belongs to the SHMT family. In terms of assembly, homodimer. Pyridoxal 5'-phosphate is required as a cofactor.

The protein resides in the cytoplasm. It carries out the reaction (6R)-5,10-methylene-5,6,7,8-tetrahydrofolate + glycine + H2O = (6S)-5,6,7,8-tetrahydrofolate + L-serine. It participates in one-carbon metabolism; tetrahydrofolate interconversion. Its pathway is amino-acid biosynthesis; glycine biosynthesis; glycine from L-serine: step 1/1. Functionally, catalyzes the reversible interconversion of serine and glycine with tetrahydrofolate (THF) serving as the one-carbon carrier. This reaction serves as the major source of one-carbon groups required for the biosynthesis of purines, thymidylate, methionine, and other important biomolecules. Also exhibits THF-independent aldolase activity toward beta-hydroxyamino acids, producing glycine and aldehydes, via a retro-aldol mechanism. The protein is Serine hydroxymethyltransferase of Shewanella sediminis (strain HAW-EB3).